A 640-amino-acid polypeptide reads, in one-letter code: Dextranase (640 aa).

Residues 1-32 form the signal peptide; it reads MPGTGLGRLAKRMTAAAAVFFISTSAVLPAQA. Positions 33–49 are excised as a propeptide; it reads ATAPAAAPPGVPAALKA. The interval 248–269 is disordered; it reads EQKERLVPTEESGSIHYPEPGE.

It belongs to the glycosyl hydrolase 49 family.

It is found in the secreted. The enzyme catalyses Endohydrolysis of (1-&gt;6)-alpha-D-glucosidic linkages in dextran.. Functionally, efficiently decomposes water-insoluble glucan as well as dextran. In Arthrobacter sp. (strain CB-8), this protein is Dextranase.